We begin with the raw amino-acid sequence, 624 residues long: DNA mismatch repair protein MutL (624 aa).

A disordered region spans residues 360–396; sequence GGNHFSQPAPRRETASTEPAVARERAPQPAYHSGSGY. Over residues 369–385 the composition is skewed to basic and acidic residues; it reads PRRETASTEPAVARERA.

The protein belongs to the DNA mismatch repair MutL/HexB family.

Functionally, this protein is involved in the repair of mismatches in DNA. It is required for dam-dependent methyl-directed DNA mismatch repair. May act as a 'molecular matchmaker', a protein that promotes the formation of a stable complex between two or more DNA-binding proteins in an ATP-dependent manner without itself being part of a final effector complex. The sequence is that of DNA mismatch repair protein MutL from Serratia proteamaculans (strain 568).